Here is a 25-residue protein sequence, read N- to C-terminus: Malate dehydrogenase (25 aa).

Gly11 to Gly17 provides a ligand contact to NAD(+).

Belongs to the LDH/MDH superfamily. MDH type 2 family.

It catalyses the reaction (S)-malate + NAD(+) = oxaloacetate + NADH + H(+). Catalyzes the reversible oxidation of malate to oxaloacetate. This Phenylobacterium immobile protein is Malate dehydrogenase (mdh).